The sequence spans 86 residues: Protein Vpu (86 aa).

The Extracellular segment spans residues 1–12 (MLELIGRIDYRL). Residues 13–33 (GVGALIVALIIVIIVWTIAYI) traverse the membrane as a helical segment. At 34 to 86 (EYRKLVRQRRIDWLVKRIKERAEDSGNESGGDTEELETMVDMGHLRLLDGNDL) the chain is on the cytoplasmic side. Ser-58 and Ser-62 each carry phosphoserine; by host CK2.

This sequence belongs to the HIV-1 VPU protein family. As to quaternary structure, homopentamer. Interacts with host CD4 and BRTC; these interactions induce proteasomal degradation of CD4. Interacts with host BST2; this interaction leads to the degradation of host BST2. Interacts with host FBXW11. Interacts with host AP1M1; this interaction plays a role in the mistrafficking and subsequent degradation of host BST2. Interacts with host RANBP2; this interaction allows Vpu to down-regulate host BLM sumoylation. Post-translationally, phosphorylated by host CK2. This phosphorylation is necessary for interaction with human BTRC and degradation of CD4.

It localises to the host membrane. Its activity is regulated as follows. Ion channel activity is inhibited by hexamethylene amiloride in vitro. Its function is as follows. Enhances virion budding, by targeting human CD4 and Tetherin/BST2 to proteasome degradation. Degradation of CD4 prevents any unwanted premature interactions between viral Env and its host receptor CD4 in the endoplasmic reticulum. Degradation of antiretroviral protein Tetherin/BST2 is important for virion budding, as BST2 tethers new viral particles to the host cell membrane. Mechanistically, Vpu bridges either CD4 or BST2 to BTRC, a substrate recognition subunit of the Skp1/Cullin/F-box protein E3 ubiquitin ligase, induces their ubiquitination and subsequent proteasomal degradation. The alteration of the E3 ligase specificity by Vpu seems to promote the degradation of host IKBKB, leading to NF-kappa-B down-regulation and subsequent apoptosis. Acts as a viroporin that forms an oligomeric ion channel in membranes. Modulates the host DNA repair mechanisms to promote degradation of nuclear viral cDNA in cells that are already productively infected in order to suppress immune sensing and proviral hyper-integration (superinfection). Manipulates PML-NBs and modulates SUMOylation of host BLM protein thereby enhancing its DNA-end processing activity toward viral unintegrated linear DNA. Also inhibits RAD52-mediated homologous repair of viral cDNA, preventing the generation of dead-end circular forms of single copies of the long terminal repeat and permitting sustained nucleolytic attack. The chain is Protein Vpu from Homo sapiens (Human).